We begin with the raw amino-acid sequence, 696 residues long: Glycine--tRNA ligase beta subunit (696 aa).

It belongs to the class-II aminoacyl-tRNA synthetase family. Tetramer of two alpha and two beta subunits.

The protein localises to the cytoplasm. The catalysed reaction is tRNA(Gly) + glycine + ATP = glycyl-tRNA(Gly) + AMP + diphosphate. This chain is Glycine--tRNA ligase beta subunit, found in Oleidesulfovibrio alaskensis (strain ATCC BAA-1058 / DSM 17464 / G20) (Desulfovibrio alaskensis).